The sequence spans 78 residues: Sec-independent protein translocase protein TatA (78 aa).

A helical transmembrane segment spans residues 1–21 (MGSLSIWHWIVVIAVVLLLFG). Over residues 43 to 60 (LQDDEKTAEKSEPVKSID) the composition is skewed to basic and acidic residues. The interval 43–78 (LQDDEKTAEKSEPVKSIDHTSTPGATNRTDVGSKAV) is disordered. The span at 61–72 (HTSTPGATNRTD) shows a compositional bias: polar residues.

The protein belongs to the TatA/E family. The Tat system comprises two distinct complexes: a TatABC complex, containing multiple copies of TatA, TatB and TatC subunits, and a separate TatA complex, containing only TatA subunits. Substrates initially bind to the TatABC complex, which probably triggers association of the separate TatA complex to form the active translocon.

It localises to the cell inner membrane. Functionally, part of the twin-arginine translocation (Tat) system that transports large folded proteins containing a characteristic twin-arginine motif in their signal peptide across membranes. TatA could form the protein-conducting channel of the Tat system. In Rhodopseudomonas palustris (strain ATCC BAA-98 / CGA009), this protein is Sec-independent protein translocase protein TatA.